The primary structure comprises 713 residues: Signal transducer and activator of transcription 1 (713 aa).

The SH2 domain occupies 477–574 (WCIGFISKHD…EEMLRYFESE (98 aa)).

Belongs to the transcription factor STAT family. In terms of assembly, forms a homodimer or a heterodimer with a related family member.

It localises to the cytoplasm. Its subcellular location is the nucleus. Functionally, carries out a dual function: signal transduction and activation of transcription. Activated STAT proteins play a role in repression of dauer formation. Neuronal expression is held in check by negative signals through the TGF-beta pathway that target the daf-3 transcription factor. The polypeptide is Signal transducer and activator of transcription 1 (Caenorhabditis briggsae).